The primary structure comprises 875 residues: Alanine--tRNA ligase (875 aa).

4 residues coordinate Zn(2+): His596, His600, Cys700, and His704.

Belongs to the class-II aminoacyl-tRNA synthetase family. Requires Zn(2+) as cofactor.

It is found in the cytoplasm. The catalysed reaction is tRNA(Ala) + L-alanine + ATP = L-alanyl-tRNA(Ala) + AMP + diphosphate. Functionally, catalyzes the attachment of alanine to tRNA(Ala) in a two-step reaction: alanine is first activated by ATP to form Ala-AMP and then transferred to the acceptor end of tRNA(Ala). Also edits incorrectly charged Ser-tRNA(Ala) and Gly-tRNA(Ala) via its editing domain. This chain is Alanine--tRNA ligase, found in Methanocella arvoryzae (strain DSM 22066 / NBRC 105507 / MRE50).